Here is a 785-residue protein sequence, read N- to C-terminus: Endonuclease MutS2 (785 aa).

331–338 lines the ATP pocket; that stretch reads GPNTGGKT. A Smr domain is found at 710 to 785; the sequence is LDLRGLYADE…GLGVTVVELA (76 aa).

This sequence belongs to the DNA mismatch repair MutS family. MutS2 subfamily. In terms of assembly, homodimer. Binds to stalled ribosomes, contacting rRNA.

In terms of biological role, endonuclease that is involved in the suppression of homologous recombination and thus may have a key role in the control of bacterial genetic diversity. Functionally, acts as a ribosome collision sensor, splitting the ribosome into its 2 subunits. Detects stalled/collided 70S ribosomes which it binds and splits by an ATP-hydrolysis driven conformational change. Acts upstream of the ribosome quality control system (RQC), a ribosome-associated complex that mediates the extraction of incompletely synthesized nascent chains from stalled ribosomes and their subsequent degradation. Probably generates substrates for RQC. The protein is Endonuclease MutS2 of Pelotomaculum thermopropionicum (strain DSM 13744 / JCM 10971 / SI).